We begin with the raw amino-acid sequence, 100 residues long: Large ribosomal subunit protein bL21 (100 aa).

The protein belongs to the bacterial ribosomal protein bL21 family. As to quaternary structure, part of the 50S ribosomal subunit. Contacts protein L20.

This protein binds to 23S rRNA in the presence of protein L20. The chain is Large ribosomal subunit protein bL21 from Wolbachia sp. subsp. Drosophila simulans (strain wRi).